A 177-amino-acid chain; its full sequence is Large ribosomal subunit protein uL6 (177 aa).

It belongs to the universal ribosomal protein uL6 family. In terms of assembly, part of the 50S ribosomal subunit.

This protein binds to the 23S rRNA, and is important in its secondary structure. It is located near the subunit interface in the base of the L7/L12 stalk, and near the tRNA binding site of the peptidyltransferase center. The polypeptide is Large ribosomal subunit protein uL6 (Ruegeria pomeroyi (strain ATCC 700808 / DSM 15171 / DSS-3) (Silicibacter pomeroyi)).